The primary structure comprises 372 residues: MAEAAVASTVTLPVSGGWTKHVTCRYFMHGLCKEGDNCRYSHDLTNSKPAAMICKFFQKGNCVFGERCRFDHCKPTKNEEFSSPQMLPPSSPSPSTDPESSQPAPRPKTQDWANAAEFVPGQPYCGRAESVKVEISIPLIEELDCDAAVDKEALRKQLCPYAAVGECRYGINCAYLHGDVCDMCGLQVLHPTDNSQRSQHTKACIEAHEKDMEISFAIQRSKDMMCGVCMEVVFEKANPSERRFGILSNCNHCYCLKCIRKWRSAKQFESKIIKSCPECRITSNFVIPSEYWVEDKEDKQKLIQKYKDGMGRKPCRYFDEGRGICPFGANCFYKHAFPDGRLEEAQPQRRQTGSSSRNRLSEMLLMLLAAGD.

C3H1-type zinc fingers lie at residues 20-45 (KHVT…HDLT) and 48-75 (KPAA…HCKP). Residues 78–110 (NEEFSSPQMLPPSSPSPSTDPESSQPAPRPKTQ) are disordered. Over residues 93-103 (SPSTDPESSQP) the composition is skewed to low complexity. A C3H1-type 3 zinc finger spans residues 153 to 180 (ALRKQLCPYAAVGECRYGINCAYLHGDV). Residues 181-208 (CDMCGLQVLHPTDNSQRSQHTKACIEAH) form a makorin-type Cys-His region. The segment at 226-280 (CGVCMEVVFEKANPSERRFGILSNCNHCYCLKCIRKWRSAKQFESKIIKSCPECR) adopts an RING-type zinc-finger fold. Residues 309-338 (GMGRKPCRYFDEGRGICPFGANCFYKHAFP) form a C3H1-type 4 zinc finger.

It carries out the reaction S-ubiquitinyl-[E2 ubiquitin-conjugating enzyme]-L-cysteine + [acceptor protein]-L-lysine = [E2 ubiquitin-conjugating enzyme]-L-cysteine + N(6)-ubiquitinyl-[acceptor protein]-L-lysine.. It functions in the pathway protein modification; protein ubiquitination. E3 ubiquitin ligase catalyzing the covalent attachment of ubiquitin moieties onto substrate proteins. This chain is Probable E3 ubiquitin-protein ligase makorin-1, found in Tetraodon nigroviridis (Spotted green pufferfish).